A 447-amino-acid polypeptide reads, in one-letter code: Phosphatidylinositol 4-kinase type 2-alpha (447 aa).

The disordered stretch occupies residues methionine 1 to glutamate 77. A compositionally biased stretch (basic and acidic residues) spans arginine 48–glutamate 77. One can recognise a PI3K/PI4K catalytic domain in the interval glycine 92–threonine 421. Positions isoleucine 98–glycine 104 are G-loop. ATP-binding positions include tyrosine 99–serine 105 and lysine 120. The important for substrate binding stretch occupies residues glutamate 125–tyrosine 127. Positions lysine 133 to cysteine 146 are important for interaction with membranes. S-palmitoyl cysteine attachment occurs at residues cysteine 142, cysteine 143, cysteine 145, and cysteine 146. Position 229–232 (glutamine 229–valine 232) interacts with ATP. The important for interaction with membranes stretch occupies residues lysine 236 to arginine 244. A catalytic loop region spans residues arginine 273–asparagine 281. Residues alanine 312–phenylalanine 332 form an activation loop region. Aspartate 314 lines the ATP pocket. Positions tryptophan 327–tryptophan 336 are important for interaction with membranes.

This sequence belongs to the PI3/PI4-kinase family. Type II PI4K subfamily.

It localises to the golgi apparatus. Its subcellular location is the trans-Golgi network membrane. The protein resides in the membrane raft. It is found in the endosome. The protein localises to the cytoplasmic vesicle. It localises to the cell projection. Its subcellular location is the dendrite. The protein resides in the presynaptic cell membrane. It is found in the synapse. The protein localises to the synaptosome. It localises to the mitochondrion. Its subcellular location is the membrane. The protein resides in the cell membrane. It is found in the perikaryon. The protein localises to the neuron projection. The catalysed reaction is a 1,2-diacyl-sn-glycero-3-phospho-(1D-myo-inositol) + ATP = a 1,2-diacyl-sn-glycero-3-phospho-(1D-myo-inositol 4-phosphate) + ADP + H(+). Functionally, membrane-bound phosphatidylinositol-4 kinase (PI4-kinase) that catalyzes the phosphorylation of phosphatidylinositol (PI) to phosphatidylinositol 4-phosphate (PI4P), a lipid that plays important roles in endocytosis, Golgi function, protein sorting and membrane trafficking. Besides, phosphorylation of phosphatidylinositol (PI) to phosphatidylinositol 4-phosphate (PI4P) is the first committed step in the generation of phosphatidylinositol 4,5-bisphosphate (PIP2), a precursor of the second messenger inositol 1,4,5-trisphosphate (InsP3). The polypeptide is Phosphatidylinositol 4-kinase type 2-alpha (pi4k2a) (Danio rerio (Zebrafish)).